The following is a 280-amino-acid chain: Probable endonuclease lcl3 (280 aa).

The helical transmembrane segment at 50–67 (TLIPTLILTTAILSAARF) threads the bilayer. One can recognise a TNase-like domain in the interval 89–257 (RSIYGKVTSV…KLKGNGMWKG (169 aa)). The active site involves R140. D145 contributes to the Ca(2+) binding site. Catalysis depends on residues E148 and R188.

This sequence belongs to the LCL3 family.

It is found in the mitochondrion. It localises to the membrane. The sequence is that of Probable endonuclease lcl3 (lcl3) from Emericella nidulans (strain FGSC A4 / ATCC 38163 / CBS 112.46 / NRRL 194 / M139) (Aspergillus nidulans).